The chain runs to 904 residues: Protein translocase subunit SecA (904 aa).

ATP-binding positions include Q89, 107–111 (GEGKT), and D502. The interval 872–892 (VESDPTTWGEPSRNDPCPCGS) is disordered. C888, C890, C899, and H900 together coordinate Zn(2+).

Belongs to the SecA family. In terms of assembly, part of the essential protein translocation apparatus which comprises SecA, SecYEG and auxiliary proteins SecDF-YajC and YidC. Homodimer. It depends on Zn(2+) as a cofactor.

It is found in the cell inner membrane. Its subcellular location is the cytoplasm. The enzyme catalyses ATP + H2O + cellular proteinSide 1 = ADP + phosphate + cellular proteinSide 2.. Its function is as follows. Part of the Sec protein translocase complex. Interacts with the SecYEG preprotein conducting channel. Has a central role in coupling the hydrolysis of ATP to the transfer of proteins into and across the cell membrane, serving both as a receptor for the preprotein-SecB complex and as an ATP-driven molecular motor driving the stepwise translocation of polypeptide chains across the membrane. The sequence is that of Protein translocase subunit SecA from Rhodobacter capsulatus (Rhodopseudomonas capsulata).